Consider the following 128-residue polypeptide: Small ribosomal subunit protein uS12 (128 aa).

The disordered stretch occupies residues 1-25 (MPTIQQLIRRGRKTKASKTASPALE). Asp89 bears the 3-methylthioaspartic acid mark. A disordered region spans residues 101–128 (SLDTSGVADRRNSRSKYGAKRPKEAAAK).

It belongs to the universal ribosomal protein uS12 family. In terms of assembly, part of the 30S ribosomal subunit. Contacts proteins S8 and S17. May interact with IF1 in the 30S initiation complex.

Functionally, with S4 and S5 plays an important role in translational accuracy. Interacts with and stabilizes bases of the 16S rRNA that are involved in tRNA selection in the A site and with the mRNA backbone. Located at the interface of the 30S and 50S subunits, it traverses the body of the 30S subunit contacting proteins on the other side and probably holding the rRNA structure together. The combined cluster of proteins S8, S12 and S17 appears to hold together the shoulder and platform of the 30S subunit. The protein is Small ribosomal subunit protein uS12 of Chlorobium phaeobacteroides (strain BS1).